The primary structure comprises 548 residues: Adenine deaminase (548 aa).

This sequence belongs to the metallo-dependent hydrolases superfamily. Adenine deaminase family. Mn(2+) is required as a cofactor.

It carries out the reaction adenine + H2O + H(+) = hypoxanthine + NH4(+). The polypeptide is Adenine deaminase (Borreliella burgdorferi (strain ATCC 35210 / DSM 4680 / CIP 102532 / B31) (Borrelia burgdorferi)).